Reading from the N-terminus, the 60-residue chain is Mastoparan-VT4 (60 aa).

A signal peptide spans 1–27 (MKNPILILFTAFIALLGFFGMSAEALA). 4 AXPX repeats span residues 27 to 30 (ADPK), 31 to 34 (ADPL), 35 to 38 (AGPN), and 41 to 44 (ADPE). Positions 28–45 (DPKADPLAGPNPDADPEA) are excised as a propeptide. Leucine amide is present on Leu59.

The protein belongs to the MCD family. Mastoparan subfamily. Expressed by the venom gland.

It is found in the secreted. In terms of biological role, the synthetic peptide shows antimicrobial activities against Gram-negative bacteria (but not against all strains tested), Gram-positive bacteria (not all strains tested) and the fungi C.albicans and C.parapsilosis. Exhibits little hemolytic activity against washed human erythrocytes. The chain is Mastoparan-VT4 from Vespa tropica (Greater banded hornet).